We begin with the raw amino-acid sequence, 388 residues long: Succinate--CoA ligase [ADP-forming] subunit beta (388 aa).

An ATP-grasp domain is found at 9 to 244 (KQLFSRYGLP…PSQEDPREAQ (236 aa)). ATP is bound by residues K46, 53 to 55 (GRG), E99, T102, and E107. 2 residues coordinate Mg(2+): N199 and D213. Substrate contacts are provided by residues N264 and 321-323 (GIV).

This sequence belongs to the succinate/malate CoA ligase beta subunit family. Heterotetramer of two alpha and two beta subunits. The cofactor is Mg(2+).

The catalysed reaction is succinate + ATP + CoA = succinyl-CoA + ADP + phosphate. It catalyses the reaction GTP + succinate + CoA = succinyl-CoA + GDP + phosphate. Its pathway is carbohydrate metabolism; tricarboxylic acid cycle; succinate from succinyl-CoA (ligase route): step 1/1. Functionally, succinyl-CoA synthetase functions in the citric acid cycle (TCA), coupling the hydrolysis of succinyl-CoA to the synthesis of either ATP or GTP and thus represents the only step of substrate-level phosphorylation in the TCA. The beta subunit provides nucleotide specificity of the enzyme and binds the substrate succinate, while the binding sites for coenzyme A and phosphate are found in the alpha subunit. The protein is Succinate--CoA ligase [ADP-forming] subunit beta of Proteus mirabilis (strain HI4320).